The sequence spans 429 residues: Enolase (429 aa).

Q162 is a (2R)-2-phosphoglycerate binding site. E204 functions as the Proton donor in the catalytic mechanism. Mg(2+)-binding residues include D241, E288, and D315. (2R)-2-phosphoglycerate is bound by residues K340, R369, S370, and K391. K340 serves as the catalytic Proton acceptor.

This sequence belongs to the enolase family. Mg(2+) serves as cofactor.

The protein localises to the cytoplasm. The protein resides in the secreted. It localises to the cell surface. It carries out the reaction (2R)-2-phosphoglycerate = phosphoenolpyruvate + H2O. It functions in the pathway carbohydrate degradation; glycolysis; pyruvate from D-glyceraldehyde 3-phosphate: step 4/5. In terms of biological role, catalyzes the reversible conversion of 2-phosphoglycerate (2-PG) into phosphoenolpyruvate (PEP). It is essential for the degradation of carbohydrates via glycolysis. The sequence is that of Enolase from Bacteroides fragilis (strain ATCC 25285 / DSM 2151 / CCUG 4856 / JCM 11019 / LMG 10263 / NCTC 9343 / Onslow / VPI 2553 / EN-2).